We begin with the raw amino-acid sequence, 219 residues long: Flagellar transcriptional regulator FlhC (219 aa).

Residues cysteine 137, cysteine 140, cysteine 157, and cysteine 160 each coordinate Zn(2+).

This sequence belongs to the FlhC family. In terms of assembly, heterohexamer composed of two FlhC and four FlhD subunits. Each FlhC binds a FlhD dimer, forming a heterotrimer, and a hexamer assembles by dimerization of two heterotrimers. Zn(2+) serves as cofactor.

The protein resides in the cytoplasm. Functionally, functions in complex with FlhD as a master transcriptional regulator that regulates transcription of several flagellar and non-flagellar operons by binding to their promoter region. Activates expression of class 2 flagellar genes, including fliA, which is a flagellum-specific sigma factor that turns on the class 3 genes. Also regulates genes whose products function in a variety of physiological pathways. The chain is Flagellar transcriptional regulator FlhC from Paraburkholderia phymatum (strain DSM 17167 / CIP 108236 / LMG 21445 / STM815) (Burkholderia phymatum).